The sequence spans 602 residues: MEHNKVDTEPQDSYDDQQKWVLDSSTDSRGEIPLRAQTGAWRAALFIIGIEFSERLSYFGISTNLVVYLTTILHQDLKMAVKNTNYWSGVTTLMPLLGGFVADAYLGRYGTVLLATTIYLMGLILLTLSWFIPGLKACHEDMCVEPRKAHEIAFFIAIYLISIGTGGHKPSLESFGADQFEDGHPEERKMKMSYFNWWNAGLCAGILTAVTVIVYIEDRIGWGVASIILTIVMATSFFIFRIGKPFYRYRAPSGSPLTPMLQVFVAAIAKRNLPCPSDSSLLHELTNEEYTKGRLLSSSKNLKFLDKAAVIEDRNENTKAEKQSPWRLATVTKVEEVKLLINMIPIWFFTLAFGVCATQSSTLFIKQAIIMDRHITGTSFIVPPASLFSLIALSIIITVTIYEKLLVPLLRRATGNERGISILQRIGVGMVFSLFAMIIAALIEKKRLDYAKEHHMNKTMTLSAIWLAPQFLVLGVADAFTLVGLQEYFYDQVPDSMRSLGIAFYLSVLGAASFVNNLLITVSDHLAEEISGKGWFGKDLNSSRLDRFYWMLAALTAANICCFVIVAMRYTYKTVQPSLAVVADGGDDVETATGTNNTSKFT.

Transmembrane regions (helical) follow at residues 56 to 73 and 87 to 107; these read LSYF…TTIL and WSGV…AYLG. Threonine 111 carries the post-translational modification Phosphothreonine. A run of 10 helical transmembrane segments spans residues 112–132, 152–172, 197–217, 220–240, 337–357, 381–401, 422–442, 465–485, 500–520, and 548–568; these read VLLA…SWFI, IAFF…KPSL, WWNA…VYIE, IGWG…FFIF, VKLL…GVCA, IVPP…TVTI, ILQR…IAAL, IWLA…LVGL, LGIA…NLLI, and FYWM…IVAM.

Belongs to the major facilitator superfamily. Proton-dependent oligopeptide transporter (POT/PTR) (TC 2.A.17) family. In terms of tissue distribution, expressed in shoots, stems, leaves and flowers.

The protein localises to the membrane. This chain is Protein NRT1/ PTR FAMILY 5.7 (NPF5.7), found in Arabidopsis thaliana (Mouse-ear cress).